Here is a 78-residue protein sequence, read N- to C-terminus: D-alanyl carrier protein (78 aa).

The Carrier domain maps to 1–78 (MEFKNQVYGI…HIAEQLAEMK (78 aa)). Residue Ser36 is modified to O-(pantetheine 4'-phosphoryl)serine.

This sequence belongs to the DltC family. Post-translationally, 4'-phosphopantetheine is transferred from CoA to a specific serine of apo-DCP.

It is found in the cytoplasm. Its pathway is cell wall biogenesis; lipoteichoic acid biosynthesis. Functionally, carrier protein involved in the D-alanylation of lipoteichoic acid (LTA). The loading of thioester-linked D-alanine onto DltC is catalyzed by D-alanine--D-alanyl carrier protein ligase DltA. The DltC-carried D-alanyl group is further transferred to cell membrane phosphatidylglycerol (PG) by forming an ester bond, probably catalyzed by DltD. D-alanylation of LTA plays an important role in modulating the properties of the cell wall in Gram-positive bacteria, influencing the net charge of the cell wall. This chain is D-alanyl carrier protein, found in Bacillus pumilus (strain SAFR-032).